A 360-amino-acid polypeptide reads, in one-letter code: Glutamate 5-kinase (360 aa).

Lys-11 is an ATP binding site. Ser-51, Asp-138, and Asn-150 together coordinate substrate. The region spanning 278–356 is the PUA domain; the sequence is KGEIHINECA…GKKPVVHYDY (79 aa).

This sequence belongs to the glutamate 5-kinase family.

It is found in the cytoplasm. It catalyses the reaction L-glutamate + ATP = L-glutamyl 5-phosphate + ADP. The protein operates within amino-acid biosynthesis; L-proline biosynthesis; L-glutamate 5-semialdehyde from L-glutamate: step 1/2. Functionally, catalyzes the transfer of a phosphate group to glutamate to form L-glutamate 5-phosphate. In Bacteroides thetaiotaomicron (strain ATCC 29148 / DSM 2079 / JCM 5827 / CCUG 10774 / NCTC 10582 / VPI-5482 / E50), this protein is Glutamate 5-kinase.